The chain runs to 490 residues: Metal cation symporter ZIP14 (490 aa).

The first 28 residues, 1 to 28 (MELLRPALPSYFLLTLLSIWTAASEARA), serve as a signal peptide directing secretion. The Extracellular portion of the chain corresponds to 29-155 (VSTGMPTISA…PSSVEVWGYG (127 aa)). N-linked (GlcNAc...) asparagine glycosylation is found at asparagine 75, asparagine 85, and asparagine 100. The segment at 127 to 146 (ACSSENQENEENEQTEEGRP) is disordered. A helical transmembrane segment spans residues 156-176 (LLCVTVISLCSLLGASVVPFM). Topologically, residues 177 to 184 (KKTFYKRL) are cytoplasmic. Residues 185-205 (LLYFIALAIGTLYSNALFQLI) form a helical membrane-spanning segment. Over 206–222 (PEAFGFNPMEDYYVSKS) the chain is Extracellular. Residues 223–243 (AVVFGGFYLFFFTEKILKMLL) form a helical membrane-spanning segment. The Cytoplasmic segment spans residues 244–395 (KQKNEHHHGH…LLNAGMSLQQ (152 aa)). The HHHGHXHX-motif motif lies at 249 to 256 (HHHGHSHY). Residues 374–379 (EEFPHE) carry the XEXPHE-motif motif. The helical transmembrane segment at 396–416 (ALFFNFLSACCCYVGLGFGIL) threads the bilayer. Residues 417–422 (AGSHFS) are Extracellular-facing. A helical transmembrane segment spans residues 423–443 (ANWIFALAGGMFLYISLADMF). The Cytoplasmic portion of the chain corresponds to 444-459 (PEMNEVSQEDERKGSA). Residues 460 to 480 (LIPFVIQNLGLLTGFGIMLVL) form a helical membrane-spanning segment. Residues 481–490 (TMYSGHIQIG) lie on the Extracellular side of the membrane.

It belongs to the ZIP transporter (TC 2.A.5) family. Homotrimer. Post-translationally, ubiquitinated. Ubiquitination occurs upon iron depletion. The ubiquitinated form undergoes proteasomal degradation. In terms of processing, N-glycosylated. N-glycosylation at Asn-100 is required for iron-regulated extraction of the transporter from membranes and subsequent proteasomal degradation.

The protein localises to the cell membrane. It is found in the apical cell membrane. The protein resides in the basolateral cell membrane. It localises to the early endosome membrane. Its subcellular location is the late endosome membrane. The protein localises to the lysosome membrane. It carries out the reaction Zn(2+)(out) + 2 hydrogencarbonate(out) = Zn(2+)(in) + 2 hydrogencarbonate(in). It catalyses the reaction Mn(2+)(out) + 2 hydrogencarbonate(out) = Mn(2+)(in) + 2 hydrogencarbonate(in). The catalysed reaction is Fe(2+)(out) + 2 hydrogencarbonate(out) = Fe(2+)(in) + 2 hydrogencarbonate(in). The enzyme catalyses Cd(2+)(out) + 2 hydrogencarbonate(out) = Cd(2+)(in) + 2 hydrogencarbonate(in). Functionally, electroneutral transporter of the plasma membrane mediating the cellular uptake of the divalent metal cations zinc, manganese and iron that are important for tissue homeostasis, metabolism, development and immunity. Functions as an energy-dependent symporter, transporting through the membranes an electroneutral complex composed of a divalent metal cation and two bicarbonate anions. Beside these endogenous cellular substrates, can also import cadmium a non-essential metal which is cytotoxic and carcinogenic. This Bos taurus (Bovine) protein is Metal cation symporter ZIP14.